The chain runs to 443 residues: D-aminoacyl-tRNA deacylase (443 aa).

The protein belongs to the DtdA deacylase family. As to quaternary structure, monomer. Zn(2+) is required as a cofactor.

It catalyses the reaction a D-aminoacyl-tRNA + H2O = a tRNA + a D-alpha-amino acid + H(+). It carries out the reaction glycyl-tRNA(Ala) + H2O = tRNA(Ala) + glycine + H(+). D-aminoacyl-tRNA deacylase with broad substrate specificity. By recycling D-aminoacyl-tRNA to D-amino acids and free tRNA molecules, this enzyme counteracts the toxicity associated with the formation of D-aminoacyl-tRNA entities in vivo. This chain is D-aminoacyl-tRNA deacylase, found in Methanocorpusculum labreanum (strain ATCC 43576 / DSM 4855 / Z).